The following is a 177-amino-acid chain: Dynein light chain Tctex-type 5-A (177 aa).

This sequence belongs to the dynein light chain Tctex-type family.

In Xenopus laevis (African clawed frog), this protein is Dynein light chain Tctex-type 5-A (Dynlt5-a).